The chain runs to 318 residues: Retinol dehydrogenase 5 (318 aa).

A helical transmembrane segment spans residues 1–21 (MWLPLLLGALLWAVLWLLRDR). At 22 to 288 (QSLPASNAFV…TRYSPGWDAK (267 aa)) the chain is on the lumenal side. Residue 32–56 (FITGCDSGFGRLLALQLDQRGFRVL) participates in NADP(+) binding. A glycan (N-linked (GlcNAc...) asparagine) is linked at asparagine 160. Serine 163 contributes to the substrate binding site. Tyrosine 175 serves as the catalytic Proton acceptor. The helical transmembrane segment at 289–309 (LLWLPASYLPASLVDAVLTWV) threads the bilayer. At 310–318 (LPKPAQAVY) the chain is on the cytoplasmic side.

The protein belongs to the short-chain dehydrogenases/reductases (SDR) family. In terms of assembly, homodimer. As to expression, widely expressed. In the eye, abundant in the retinal pigment epithelium.

It is found in the endoplasmic reticulum membrane. It catalyses the reaction 11-cis-retinol + NAD(+) = 11-cis-retinal + NADH + H(+). The catalysed reaction is 9-cis-retinol + NAD(+) = 9-cis-retinal + NADH + H(+). The enzyme catalyses 13-cis-retinol + NAD(+) = 13-cis-retinal + NADH + H(+). It carries out the reaction androsterone + NAD(+) = 5alpha-androstan-3,17-dione + NADH + H(+). It catalyses the reaction 5alpha-androstane-3alpha,17beta-diol + NAD(+) = 17beta-hydroxy-5alpha-androstan-3-one + NADH + H(+). It participates in cofactor metabolism; retinol metabolism. Its activity is regulated as follows. Inhibited by 9-cis-, 13-cis- and all-trans-retinoic acids, with the most potent inhibitor being 13-cis-retinoic acid. Weakly inhibited by oleic acid. Functionally, catalyzes the oxidation of cis-isomers of retinol, including 11-cis-, 9-cis-, and 13-cis-retinol in an NAD-dependent manner. Has no activity towards all-trans retinal. Plays a significant role in 11-cis retinol oxidation in the retinal pigment epithelium cells (RPE). Also recognizes steroids (androsterone, androstanediol) as its substrates. The sequence is that of Retinol dehydrogenase 5 from Homo sapiens (Human).